Consider the following 317-residue polypeptide: tRNA N6-adenosine threonylcarbamoyltransferase (317 aa).

H110 and H114 together coordinate Fe cation. Residues 132–136 (VVSGG), D165, G178, D182, and N271 each bind substrate. D300 is a Fe cation binding site.

This sequence belongs to the KAE1 / TsaD family. The cofactor is Fe(2+).

The protein localises to the cytoplasm. The enzyme catalyses L-threonylcarbamoyladenylate + adenosine(37) in tRNA = N(6)-L-threonylcarbamoyladenosine(37) in tRNA + AMP + H(+). In terms of biological role, required for the formation of a threonylcarbamoyl group on adenosine at position 37 (t(6)A37) in tRNAs that read codons beginning with adenine. Is involved in the transfer of the threonylcarbamoyl moiety of threonylcarbamoyl-AMP (TC-AMP) to the N6 group of A37, together with TsaE and TsaB. TsaD likely plays a direct catalytic role in this reaction. The chain is tRNA N6-adenosine threonylcarbamoyltransferase from Mesoplasma florum (strain ATCC 33453 / NBRC 100688 / NCTC 11704 / L1) (Acholeplasma florum).